The primary structure comprises 335 residues: Urokinase plasminogen activator surface receptor (335 aa).

The N-terminal stretch at 1–22 (MGHPPLLPLLLLLHTCVPASWG) is a signal peptide. UPAR/Ly6 domains follow at residues 23 to 114 (LRCM…RSRY), 115 to 213 (LECI…PQNG), and 214 to 305 (RQCY…YRSG). Disulfide bonds link Cys-25–Cys-46, Cys-28–Cys-34, and Cys-39–Cys-67. Asn-74 carries N-linked (GlcNAc...) asparagine glycosylation. Disulfide bonds link Cys-93/Cys-98, Cys-117/Cys-144, Cys-120/Cys-127, Cys-137/Cys-169, Cys-175/Cys-192, Cys-193/Cys-198, Cys-216/Cys-244, Cys-219/Cys-227, Cys-237/Cys-263, Cys-269/Cys-287, and Cys-288/Cys-293. Asn-184, Asn-194, Asn-222, and Asn-255 each carry an N-linked (GlcNAc...) asparagine glycan. The GPI-anchor amidated glycine moiety is linked to residue Gly-305. Positions 306–335 (AAPQPGPAHLSLTITLLMTARLWGGTLLWT) are cleaved as a propeptide — removed in mature form.

In terms of assembly, monomer. Interacts with MRC2. Interacts (via the UPAR/Ly6 domains) with SRPX2. Interacts with FAP (seprase); the interaction occurs at the cell surface of invadopodia membrane. Interacts with SORL1 (via N-terminal ectodomain); this interaction decreases PLAUR internalization. The ternary complex composed of PLAUR-PLAU-SERPINE1 also interacts with SORL1. Interacts with CD82; this interaction prevents PLAUR from binding to its high affinity ligand PLAU. In terms of tissue distribution, expressed in neurons of the rolandic area of the brain (at protein level). Expressed in the brain.

Its subcellular location is the cell membrane. It localises to the cell projection. The protein localises to the invadopodium membrane. It is found in the secreted. In terms of biological role, acts as a receptor for urokinase plasminogen activator. Plays a role in localizing and promoting plasmin formation. Mediates the proteolysis-independent signal transduction activation effects of U-PA. It is subject to negative-feedback regulation by U-PA which cleaves it into an inactive form. The polypeptide is Urokinase plasminogen activator surface receptor (PLAUR) (Homo sapiens (Human)).